The primary structure comprises 365 residues: Phospho-N-acetylmuramoyl-pentapeptide-transferase (365 aa).

Helical transmembrane passes span 19-39 (TLLILLWALALALMALLSSWA), 49-69 (LLIALGFTALVTALIGMAVVP), 92-112 (AGTPTMGGIFFVPVAVAIAVV), 116-136 (FNPDVIVVGLVTLGYMAIGWV), 156-176 (LFLQVAIAVIFCTWLFFYGPT), 183-203 (IMQFVLPLGFLFWLVATFALV), 215-235 (VDGLAAGTGAIAFVGLGLLVA), 238-258 (NPALAFFCCAMAGGCIGFVHH), 279-299 (LAAVGIMTGNLWGLLLISGIF), and 345-365 (QIVGSFYLINTLLAIVAMATA).

It belongs to the glycosyltransferase 4 family. MraY subfamily. Mg(2+) serves as cofactor.

It localises to the cell inner membrane. It catalyses the reaction UDP-N-acetyl-alpha-D-muramoyl-L-alanyl-gamma-D-glutamyl-meso-2,6-diaminopimeloyl-D-alanyl-D-alanine + di-trans,octa-cis-undecaprenyl phosphate = di-trans,octa-cis-undecaprenyl diphospho-N-acetyl-alpha-D-muramoyl-L-alanyl-D-glutamyl-meso-2,6-diaminopimeloyl-D-alanyl-D-alanine + UMP. It participates in cell wall biogenesis; peptidoglycan biosynthesis. In terms of biological role, catalyzes the initial step of the lipid cycle reactions in the biosynthesis of the cell wall peptidoglycan: transfers peptidoglycan precursor phospho-MurNAc-pentapeptide from UDP-MurNAc-pentapeptide onto the lipid carrier undecaprenyl phosphate, yielding undecaprenyl-pyrophosphoryl-MurNAc-pentapeptide, known as lipid I. In Synechocystis sp. (strain ATCC 27184 / PCC 6803 / Kazusa), this protein is Phospho-N-acetylmuramoyl-pentapeptide-transferase.